We begin with the raw amino-acid sequence, 209 residues long: Chaperone protein TorD (209 aa).

Belongs to the TorD/DmsD family. TorD subfamily.

It is found in the cytoplasm. Involved in the biogenesis of TorA. Acts on TorA before the insertion of the molybdenum cofactor and, as a result, probably favors a conformation of the apoenzyme that is competent for acquiring the cofactor. The sequence is that of Chaperone protein TorD from Salmonella bongori (strain ATCC 43975 / DSM 13772 / NCTC 12419).